The chain runs to 71 residues: Heat-stable enterotoxin B (71 aa).

An N-terminal signal peptide occupies residues 1–19 (MKKIILALVLMLFSFCTLG). Positions 20 to 52 (QETASMHLDDTLSAPIAAEINRKACDTQTPSPS) are excised as a propeptide. 3 disulfide bridges follow: cysteine 59–cysteine 64, cysteine 60–cysteine 68, and cysteine 63–cysteine 71.

Belongs to the heat-stable enterotoxin family.

It is found in the secreted. In terms of biological role, toxin which activates the particulate form of guanylate cyclase and increases cyclic GMP levels within the host intestinal epithelial cells. Could play an important role in pathogenesis. In Yersinia enterocolitica, this protein is Heat-stable enterotoxin B (ystB).